Consider the following 340-residue polypeptide: MRKELQLSLSVTLLLVCGFLYQFTLKSSCLFCLPSFKSHQGLEALLSHRRGIVFLETSERMEPPHLVSCSVESAAKIYPEWPVVFFMKGLTDSTPMPSNSTYPAFSFLSAIDNVFLFPLDMKRLLEDTPLFSWYNQINASAERNWLHISSDASRLAIIWKYGGIYMDTDVISIRPIPEENFLAAQASRYSSNGIFGFLPHHPFLWECMENFVEHYNSAIWGNQGPELMTRMLRVWCKLEDFQEVSDLRCLNISFLHPQRFYPISYREWRRYYEVWDTEPSFNVSYALHLWNHMNQEGRAVIRGSNTLVENLYRKHCPRTYRDLIKGPEGSVTGELGPGNK.

Over 1 to 4 (MRKE) the chain is Cytoplasmic. The chain crosses the membrane as a helical; Signal-anchor for type II membrane protein span at residues 5–25 (LQLSLSVTLLLVCGFLYQFTL). Residues 26–340 (KSSCLFCLPS…VTGELGPGNK (315 aa)) lie on the Lumenal side of the membrane. Residues asparagine 99 and asparagine 138 are each glycosylated (N-linked (GlcNAc...) asparagine). Positions 167–169 (DTD) match the DXD motif motif. N-linked (GlcNAc...) asparagine glycosylation is found at asparagine 251 and asparagine 282.

This sequence belongs to the glycosyltransferase 32 family. As to expression, detected in stomach and pancreas.

Its subcellular location is the golgi apparatus membrane. Its pathway is protein modification; protein glycosylation. Its function is as follows. Catalyzes the transfer of N-acetylglucosamine (GlcNAc) to core 2 branched O-glycans. Necessary for the synthesis of type III mucin which is specifically produced in the stomach, duodenum, and pancreatic duct. May protect against inflammation-associated gastric adenocarcinomas. This chain is Alpha-1,4-N-acetylglucosaminyltransferase (A4GNT), found in Homo sapiens (Human).